The chain runs to 489 residues: DBIRD complex subunit ZNF326 (489 aa).

Disordered stretches follow at residues 1–28, 62–100, 133–181, and 205–263; these read MDRE…EMGD, EQGH…PSFT, VGSR…RPGL, and PPFK…KNSE. Polar residues predominate over residues 7 to 22; sequence SYNQRSMDSYGNQSYS. Positions 62–76 are enriched in basic and acidic residues; the sequence is EQGHFGDSYDGRYEN. Residues 91-100 are compositionally biased toward polar residues; that stretch reads GGSSWDPSFT. The Bipartite nuclear localization signal motif lies at 200–221; the sequence is KRKMAPPFKPVGVFGKKQKLSK. 2 consecutive C2H2 AKAP95-type zinc fingers follow at residues 273-295 and 365-388; these read CSFC…STTH and CSAC…SADH. The segment at 431-489 is disordered; it reads ETQPEEQQQEQEEEEEEEEQQEQAAVPEQDLSEEQPAAIAAEPEGEDFTCDPLTTTDEV. Positions 433–451 are enriched in acidic residues; sequence QPEEQQQEQEEEEEEEEQQ.

Belongs to the AKAP95 family. In terms of assembly, component of the DBIRD complex.

It is found in the nucleus. Functionally, core component of the DBIRD complex, a multiprotein complex that acts at the interface between core mRNP particles and RNA polymerase II (RNAPII) and integrates transcript elongation with the regulation of alternative splicing. In Xenopus tropicalis (Western clawed frog), this protein is DBIRD complex subunit ZNF326 (znf326).